A 780-amino-acid chain; its full sequence is cGMP-dependent protein kinase egl-4 (780 aa).

Disordered stretches follow at residues 1–55 (MSSG…QVQV) and 119–143 (EQKAQSAASPGGQPPSPSPRTDQLG). A compositionally biased stretch (gly residues) spans 9–35 (SGGGGGGGGASGGAGGGAPGGGGGGIR). Polar residues predominate over residues 46–55 (DQPNGNQVQV). The stretch at 61–127 (EAHELQKLIP…LEQKAQSAAS (67 aa)) forms a coiled coil. 3',5'-cyclic GMP is bound by residues 265-268 (GELA), 275-276 (RT), R380, 389-392 (GERA), 399-400 (RT), and Y434. The Protein kinase domain maps to 469-729 (VKRLATLGVG…VNDIRKHRWF (261 aa)). ATP-binding positions include 475-483 (LGVGGFGRV) and K499. The short motif at 492-504 (KAKTFALKALKKK) is the Nuclear localization signal element. The Proton acceptor role is filled by D593. Positions 730 to 780 (MGFDWEGLRSRTLKPPILPKVSNPADVTNFDNYPPDNDVPPDEFSGWDEGF) constitute an AGC-kinase C-terminal domain. Residues 757–780 (TNFDNYPPDNDVPPDEFSGWDEGF) form a disordered region.

It belongs to the protein kinase superfamily. AGC Ser/Thr protein kinase family. cGMP subfamily. In terms of assembly, when phosphorylated, interacts with saeg-2. May interact with saeg-1. The cofactor is Mg(2+). Autophosphorylated. In terms of tissue distribution, expressed in AWC sensory neurons (at protein level). Mainly expressed in head neurons, hypodermis, intestine and body wall muscles. L2 and L3 larvae show extensive expression, lower levels are observed in L4 larvae, later embryos and adults. Isoform c is expressed in a subset of neurons in the head, nerve ring, and ventral nerve cord including some motor neurons, also in several neurons in the tail, the pharyngeal marginal cells, body muscle, intestine, vulval muscles, and spermatheca.

Its subcellular location is the cytoplasm. The protein resides in the nucleus. The catalysed reaction is L-seryl-[protein] + ATP = O-phospho-L-seryl-[protein] + ADP + H(+). It carries out the reaction L-threonyl-[protein] + ATP = O-phospho-L-threonyl-[protein] + ADP + H(+). Binding of cGMP results in enzyme activation. In terms of biological role, promotes chemoreceptor gene expression in response to increased cGMP levels by antagonizing the gene repression functions of the class II HDAC hda-4 and the mef-2 transcription factor. Regulates gene expression via recruitment of a histone deacetylase complex containing hda-2, saeg-1 and saeg-2. Represses body size and lifespan through the dbl-1 and insulin pathways, respectively. May also signal through daf-3 and/or daf-5. Role in egg-laying, dauer formation and motility. Regulates behavioral responses to various chemosensory stimuli in sensory neurons. Required for the initiation of long term adaptation to prolonged odor exposure which results in a decrease in odor seeking behavior. May regulate this process by phosphorylating tax-2, a subunit of cyclic nucleotide-gated channel tax-2/tax-4. In ASH sensory neurons, negatively regulates avoidance behavior to some bitter tastants, such as quinine, probably by phosphorylating rgs-2 and rgs-3 which are 2 regulator of G-protein signaling proteins. In AWB sensory neurons, involved in avoidance behavior to some repellent odors. In ASE left (ASEL) sensory neuron, involved in the sensing of environmental alkalinity downstream of receptor-type guanylate cyclase gcy-14. In sensory neurons, involved in the signaling pathway downstream of insulin, TGF-beta and receptor-type guanylate cyclase responsible for inducing quiescence after food intake. Might play a role in aversive olfactory learning in AWC neurons when an odor is associated with food deprivation, depending on the ins-1/age-1 signal from the AIA to the AWC neurons. Probably by regulating neuronal transmission downstream of lin-3 and receptor lin-23 and phospholipase plc-3 in ALA neurons, involved in the decrease in locomotion during the quiescent state that precedes each larval molt. This chain is cGMP-dependent protein kinase egl-4, found in Caenorhabditis elegans.